We begin with the raw amino-acid sequence, 259 residues long: Polycomb group RING finger protein 1 (259 aa).

The RING-type zinc finger occupies 45-84 (CYLCAGYFIDATTITECLHTFCKSCIVKYLQTSKYCPLCN).

In terms of assembly, component of a PRC1-like complex.

The protein localises to the nucleus. Component of a Polycomb group (PcG) multiprotein PRC1-like complex, a complex class required to maintain the transcriptionally repressive state of many genes, including Hox genes, throughout development. PcG PRC1 complex acts via chromatin remodeling and modification of histones; it mediates monoubiquitination of histone H2A 'Lys-119', rendering chromatin heritably changed in its expressibility. The protein is Polycomb group RING finger protein 1 (pcgf1) of Xenopus laevis (African clawed frog).